Consider the following 601-residue polypeptide: UvrABC system protein C (601 aa).

Positions 15-94 (LQPGVYLFKN…IKSYKPRYNI (80 aa)) constitute a GIY-YIG domain. Positions 202-237 (QEIVREKEKEMAMAARSLEFEKAARLRDQIQSLRQL) constitute a UVR domain.

This sequence belongs to the UvrC family. As to quaternary structure, interacts with UvrB in an incision complex.

It is found in the cytoplasm. Its function is as follows. The UvrABC repair system catalyzes the recognition and processing of DNA lesions. UvrC both incises the 5' and 3' sides of the lesion. The N-terminal half is responsible for the 3' incision and the C-terminal half is responsible for the 5' incision. In Syntrophomonas wolfei subsp. wolfei (strain DSM 2245B / Goettingen), this protein is UvrABC system protein C.